The following is a 175-amino-acid chain: Large ribosomal subunit protein uL10 (175 aa).

The protein belongs to the universal ribosomal protein uL10 family. As to quaternary structure, part of the ribosomal stalk of the 50S ribosomal subunit. The N-terminus interacts with L11 and the large rRNA to form the base of the stalk. The C-terminus forms an elongated spine to which L12 dimers bind in a sequential fashion forming a multimeric L10(L12)X complex.

In terms of biological role, forms part of the ribosomal stalk, playing a central role in the interaction of the ribosome with GTP-bound translation factors. The polypeptide is Large ribosomal subunit protein uL10 (Prochlorococcus marinus (strain MIT 9515)).